Consider the following 134-residue polypeptide: Protein NrdI (134 aa).

This sequence belongs to the NrdI family.

Probably involved in ribonucleotide reductase function. The chain is Protein NrdI from Rhizobium etli (strain CIAT 652).